The primary structure comprises 85 residues: UPF0297 protein LBUL_1485 (85 aa).

Belongs to the UPF0297 family.

The chain is UPF0297 protein LBUL_1485 from Lactobacillus delbrueckii subsp. bulgaricus (strain ATCC BAA-365 / Lb-18).